The chain runs to 112 residues: Transmembrane protein 14 homolog (112 aa).

4 helical membrane passes run Phe9–Gly26, Leu36–Leu53, Val60–Gly77, and Ile87–Ile109.

The protein belongs to the TMEM14 family.

It localises to the membrane. The sequence is that of Transmembrane protein 14 homolog from Dictyostelium discoideum (Social amoeba).